The chain runs to 180 residues: CD-NTase/cGAS isopeptidase (180 aa).

An MPN domain is found at 33-165; that stretch reads IVISSSTIEQ…AGSYSLSASV (133 aa). Glu-54 serves as the catalytic Proton donor/acceptor. Zn(2+) contacts are provided by His-115, His-117, and Asp-128.

The protein belongs to the peptidase M67B family. Cap3 isopeptidase subfamily.

In terms of biological role, metalloprotease priming reversal component of a CBASS antivirus system. CBASS (cyclic oligonucleotide-based antiphage signaling system) provides immunity against bacteriophages. The CD-NTase protein (CdnD) synthesizes cyclic nucleotides in response to infection; these serve as specific second messenger signals. The signals activate a diverse range of effectors, leading to bacterial cell death and thus abortive phage infection. A type II-C(AAG) CBASS system. Reverses the primed state of DncV, the CD-NTase. Cleaves a CdnD-GFP (green fluorescent protein) fusion protein precisely at the C-terminus of CdnD. Overexpression decreases the efficacy of CBASS protection against phage T2. Antagonism of phage defense upon overexpression is CBASS-system specific, Cap3 from this bacteria only antagonizes its cognate CBASS system and not that of C.freundii, E.coli or V.cholerae. Its function is as follows. Protects E.coli against phage T2 infection. When the cdnD-cap2-cap3-cap4 operon is introduced in E.coli there is a more than 10(3) decrease in the efficiency of T2 plaque formation. The operon does not protect against phage T5 and only about 10-fold against T7. In Enterobacter hormaechei subsp. hoffmannii (strain UCI 50), this protein is CD-NTase/cGAS isopeptidase.